A 379-amino-acid chain; its full sequence is Pectin lyase B (379 aa).

Residues 1–19 (MRLHAPILSLLAAAASTSA) form the signal peptide. Disulfide bonds link cysteine 82/cysteine 101 and cysteine 91/cysteine 225. Asparagine 128 carries N-linked (GlcNAc...) asparagine glycosylation. Residue arginine 255 is part of the active site. A disulfide bond links cysteine 322 and cysteine 330.

This sequence belongs to the polysaccharide lyase 1 family.

The protein resides in the secreted. It carries out the reaction Eliminative cleavage of (1-&gt;4)-alpha-D-galacturonan methyl ester to give oligosaccharides with 4-deoxy-6-O-methyl-alpha-D-galact-4-enuronosyl groups at their non-reducing ends.. Pectinolytic enzymes consist of four classes of enzymes: pectin lyase, polygalacturonase, pectin methylesterase and rhamnogalacturonase. Among pectinolytic enzymes, pectin lyase is the most important in depolymerization of pectin, since it cleaves internal glycosidic bonds of highly methylated pectins. The chain is Pectin lyase B (pelB) from Emericella nidulans (strain FGSC A4 / ATCC 38163 / CBS 112.46 / NRRL 194 / M139) (Aspergillus nidulans).